A 156-amino-acid chain; its full sequence is Small ribosomal subunit protein uS7c (156 aa).

The protein belongs to the universal ribosomal protein uS7 family. In terms of assembly, part of the 30S ribosomal subunit.

Its subcellular location is the plastid. It is found in the chloroplast. Its function is as follows. One of the primary rRNA binding proteins, it binds directly to 16S rRNA where it nucleates assembly of the head domain of the 30S subunit. This Porphyra purpurea (Red seaweed) protein is Small ribosomal subunit protein uS7c (rps7).